The primary structure comprises 2701 residues: Centromere-associated protein E (2701 aa).

The region spanning 6–329 (AVAVCVRVRP…LQFASTAKYM (324 aa)) is the Kinesin motor domain. Residue 86-93 (GQTASGKT) participates in ATP binding. Residues 336-2590 (NEVSTDEALL…SNEVKTWKER (2255 aa)) are a coiled coil. Phosphoserine is present on residues Ser-611 and Ser-2083. Positions 2126–2476 (KEIEFQKELS…IDLEKMKNAK (351 aa)) are kinetochore-binding domain. Residues 2355–2376 (SGAQVNPTTQDNKNPHVTSRAT) are disordered. Ser-2389 is modified (phosphoserine). Residues 2508-2527 (QAQDTSVISEHTDPQPSNKP) show a composition bias toward polar residues. Disordered stretches follow at residues 2508–2533 (QAQDTSVISEHTDPQPSNKPLTCGGG) and 2588–2701 (KERT…CKTQ). The tract at residues 2510–2698 (QDTSVISEHT…ASSGKDVPEC (189 aa)) is globular autoinhibitory domain. Residues 2588 to 2600 (KERTLKREAHKQV) show a composition bias toward basic and acidic residues. A compositionally biased stretch (polar residues) spans 2601–2625 (TCENSPKSPKVTGTASKKKQITPSQ). Residues 2626–2640 (CKERNLQDPVPKESP) are compositionally biased toward basic and acidic residues. 3 positions are modified to phosphoserine: Ser-2639, Ser-2647, and Ser-2651. At Cys-2698 the chain carries Cysteine methyl ester. Cys-2698 is lipidated: S-farnesyl cysteine. Residues 2699-2701 (KTQ) constitute a propeptide, removed in mature form.

This sequence belongs to the TRAFAC class myosin-kinesin ATPase superfamily. Kinesin family. As to quaternary structure, monomer. Interacts with CENPF. Interacts with BUB1B. Interacts with SEPT7. Interacts with KIF18A. Interacts with PRC1. Interacts with NUF2; this interaction determines kinetochore localization. Interacts with SKAP; this interaction greatly favors SKAP binding to microtubules. Interacts with TRAPPC12. Interacts with CTCF. In terms of processing, the C-terminal inhibitory domain is phosphorylated. Phosphorylation relieves autoinhibition of the kinetochore motor. Post-translationally, sumoylated with SUMO2 and SUMO3. The sumoylation mediates the association to the kinetochore.

The protein localises to the chromosome. The protein resides in the centromere. It is found in the kinetochore. Its subcellular location is the cytoplasm. It localises to the cytoskeleton. The protein localises to the spindle. Functionally, microtubule plus-end-directed kinetochore motor which plays an important role in chromosome congression, microtubule-kinetochore conjugation and spindle assembly checkpoint activation. Drives chromosome congression (alignment of chromosomes at the spindle equator resulting in the formation of the metaphase plate) by mediating the lateral sliding of polar chromosomes along spindle microtubules towards the spindle equator and by aiding the establishment and maintenance of connections between kinetochores and spindle microtubules. The transport of pole-proximal chromosomes towards the spindle equator is favored by microtubule tracks that are detyrosinated. Acts as a processive bi-directional tracker of dynamic microtubule tips; after chromosomes have congressed, continues to play an active role at kinetochores, enhancing their links with dynamic microtubule ends. Suppresses chromosome congression in NDC80-depleted cells and contributes positively to congression only when microtubules are stabilized. Plays an important role in the formation of stable attachments between kinetochores and spindle microtubules The stabilization of kinetochore-microtubule attachment also requires CENPE-dependent localization of other proteins to the kinetochore including BUB1B, MAD1 and MAD2. Plays a role in spindle assembly checkpoint activation (SAC) via its interaction with BUB1B resulting in the activation of its kinase activity, which is important for activating SAC. Necessary for the mitotic checkpoint signal at individual kinetochores to prevent aneuploidy due to single chromosome loss. The sequence is that of Centromere-associated protein E (CENPE) from Homo sapiens (Human).